We begin with the raw amino-acid sequence, 287 residues long: MHPLLVKSFAKINLGLLITAKRQDGYHTLETIFAPINWYDTIEFSDSEKISMSCSNSDLPVDDNNLCIKAARSLQQFAAVRKGIAMKLQKQVPFGAGLGGGSSDAATVLRVLNELWKVNASPAELHALAVKLGADVPYFLSMKGLAYATGIGDELDDLALTLPYYIVTVFPEEHIATVWAYKNFYSRFDRELPDLKKLLSELCLSGKKEGLPAFENDFEPAVFDHFPAVRKVKLTLLEAGSIFSSLSGSGSAVFGLFEREDEALAAMKLLPEAYRKNLTPPGFCMAQ.

The active site involves Lys11. 93–103 contributes to the ATP binding site; the sequence is PFGAGLGGGSS. The active site involves Asp135.

The protein belongs to the GHMP kinase family. IspE subfamily.

The catalysed reaction is 4-CDP-2-C-methyl-D-erythritol + ATP = 4-CDP-2-C-methyl-D-erythritol 2-phosphate + ADP + H(+). Its pathway is isoprenoid biosynthesis; isopentenyl diphosphate biosynthesis via DXP pathway; isopentenyl diphosphate from 1-deoxy-D-xylulose 5-phosphate: step 3/6. Catalyzes the phosphorylation of the position 2 hydroxy group of 4-diphosphocytidyl-2C-methyl-D-erythritol. The polypeptide is 4-diphosphocytidyl-2-C-methyl-D-erythritol kinase (Pelodictyon phaeoclathratiforme (strain DSM 5477 / BU-1)).